A 192-amino-acid polypeptide reads, in one-letter code: Erythropoietin (192 aa).

The signal sequence occupies residues 1-26 (MGVRECPALLLLLSLLLPPLGLPALG). Cystine bridges form between C33–C187 and C55–C59. N50 is a glycosylation site (N-linked (GlcNAc...) asparagine). N64 and N109 each carry an N-linked (GlcNAc...) asparagine glycan.

It belongs to the EPO/TPO family.

The protein resides in the secreted. Its function is as follows. Hormone involved in the regulation of erythrocyte proliferation and differentiation and the maintenance of a physiological level of circulating erythrocyte mass. Binds to EPOR leading to EPOR dimerization and JAK2 activation thereby activating specific downstream effectors, including STAT1 and STAT3. The sequence is that of Erythropoietin (EPO) from Equus caballus (Horse).